The following is a 187-amino-acid chain: Probable nicotinate-nucleotide adenylyltransferase (187 aa).

Belongs to the NadD family.

It catalyses the reaction nicotinate beta-D-ribonucleotide + ATP + H(+) = deamido-NAD(+) + diphosphate. It participates in cofactor biosynthesis; NAD(+) biosynthesis; deamido-NAD(+) from nicotinate D-ribonucleotide: step 1/1. In terms of biological role, catalyzes the reversible adenylation of nicotinate mononucleotide (NaMN) to nicotinic acid adenine dinucleotide (NaAD). This chain is Probable nicotinate-nucleotide adenylyltransferase, found in Anaeromyxobacter sp. (strain K).